The sequence spans 408 residues: MASSTHPKRGSLTIAGTGIATLAHMTLETVSHIKEADKVYYIVTDPVTQAFIEENAKGPTFDLSVYYDADKYRYTSYVQMAEVMLNAVREGCNVLGLFYGHPGIFVSPSHRALAIAREEGYEARMLPGVSAEDYMFADLGLDPALPGCVCYEATNFLIRNKPLNPATHNILWQVGAVGITAMDFENSKFSLLVDRLERDLGPNHKVVHYVGAVLPQSATIMETYTIAELRKPEVIKRISTTSSTFYIPPRDSEAIDYDMVARLGIPPEKYRKIPSYPPNQWAGPNYTSTPAYGPEEKAAVSQLANHVVPNSYKTLHASPAMKKVMIDLATDRSLYKKYEANRDAFVDAVKGLTELEKVALKMGTDGSVYKVMSATQADIELGKEPSIEELEEGRGRLLLVVITAAVVV.

The tract at residues 1 to 250 (MASSTHPKRG…TSSTFYIPPR (250 aa)) is methyltransferase domain. Catalysis depends on residues arginine 73, tyrosine 77, and tyrosine 99. S-adenosyl-L-methionine-binding residues include tyrosine 99, histidine 101, isoleucine 104, alanine 131, glutamine 173, glycine 211, serine 242, and threonine 244. A clasp domain region spans residues 251-375 (DSEAIDYDMV…GSVYKVMSAT (125 aa)). The segment at 371-385 (VMSATQADIELGKEP) is precursor leader. Residue valine 401 is modified to N-methylvaline. An N-methylisoleucine modification is found at isoleucine 402. Valine 406 is subject to N-methylvaline.

It in the N-terminal section; belongs to the precorrin methyltransferase family. As to quaternary structure, homodimer. SveMA automethylates at Val-401, Ile-402 and Val-406 before being processed by a prolyloligopeptidase which likely forms a peptidyl ester upon removal of the follower propeptide, which then undergoes macrocyclization with the N-terminus of the modified core peptide. Peptide backbone alpha-N-methylations change the physicochemical properties of amide bonds to provide structural constraints and other favorable characteristics including biological membrane permeability to peptides.

It participates in secondary metabolite biosynthesis. Functionally, fusion protein of the methyltransferase sveM and a type I borosin core peptide; part of the gene cluster that mediates the biosynthesis of a type I borosin, a highly methylated cyclic peptide with potent biological activities. Type I borosins derive from the C-terminus of the fusion protein, and it is the same protein that methylates its own C-terminus using S-adenosyl methionine (SAM). The C-terminus is subsequently cleaved off and macrocyclized by a prolyloligopeptidase to give the final product. The polypeptide is Methyltransferase/ribosomally synthesized type I borosin cyclic peptide precursor sveMA (Serendipita vermifera subsp. bescii (Mycorrhizal fungus)).